Reading from the N-terminus, the 771-residue chain is Carnitine O-palmitoyltransferase 1, muscle isoform (771 aa).

Over 1-47 (MAEAHQAVAFQFTVTPEGVDFQLSREVLKHIYLSVIRSWKKRLIRIK) the chain is Cytoplasmic. Residues 48-73 (NGILRGVYPGSPTSWLVVVMATAGSS) traverse the membrane as a helical segment. The Mitochondrial intermembrane segment spans residues 74-101 (YYNVDISMGLVYYIQRWLPEGRPYRTPY). A helical membrane pass occupies residues 102 to 121 (TRTLFSMAIFSTGVWMMGIF). Over 122–771 (FFRQTLKLLL…NLFQVPKADG (650 aa)) the chain is Cytoplasmic. The Proton acceptor role is filled by His472. 554 to 566 (GKGLIKKCRTSPD) serves as a coordination point for CoA. Residues Tyr588 and Thr601 each contribute to the (R)-carnitine site.

It belongs to the carnitine/choline acetyltransferase family.

It localises to the mitochondrion outer membrane. It carries out the reaction (R)-carnitine + hexadecanoyl-CoA = O-hexadecanoyl-(R)-carnitine + CoA. It participates in lipid metabolism; fatty acid beta-oxidation. In terms of biological role, catalyzes the transfer of the acyl group of long-chain fatty acid-CoA conjugates onto carnitine, an essential step for the mitochondrial uptake of long-chain fatty acids and their subsequent beta-oxidation in the mitochondrion. This Bos taurus (Bovine) protein is Carnitine O-palmitoyltransferase 1, muscle isoform (CPT1B).